The following is a 230-amino-acid chain: Enolase-phosphatase E1 (230 aa).

It belongs to the HAD-like hydrolase superfamily. MasA/MtnC family. As to quaternary structure, monomer. Mg(2+) serves as cofactor.

The catalysed reaction is 5-methylsulfanyl-2,3-dioxopentyl phosphate + H2O = 1,2-dihydroxy-5-(methylsulfanyl)pent-1-en-3-one + phosphate. It functions in the pathway amino-acid biosynthesis; L-methionine biosynthesis via salvage pathway; L-methionine from S-methyl-5-thio-alpha-D-ribose 1-phosphate: step 3/6. It participates in amino-acid biosynthesis; L-methionine biosynthesis via salvage pathway; L-methionine from S-methyl-5-thio-alpha-D-ribose 1-phosphate: step 4/6. In terms of biological role, bifunctional enzyme that catalyzes the enolization of 2,3-diketo-5-methylthiopentyl-1-phosphate (DK-MTP-1-P) into the intermediate 2-hydroxy-3-keto-5-methylthiopentenyl-1-phosphate (HK-MTPenyl-1-P), which is then dephosphorylated to form the acireductone 1,2-dihydroxy-3-keto-5-methylthiopentene (DHK-MTPene). The polypeptide is Enolase-phosphatase E1 (Marinobacter nauticus (strain ATCC 700491 / DSM 11845 / VT8) (Marinobacter aquaeolei)).